The following is an 864-amino-acid chain: Alpha-glucosidase (864 aa).

The N-terminal stretch at 1–22 (MAKVSFIFVAIALITGNVLCQT) is a signal peptide. 3 N-linked (GlcNAc...) asparagine glycosylation sites follow: Asn-187, Asn-364, and Asn-406. The active-site Nucleophile is Asp-430. The active site involves Glu-433. Asn-466 and Asn-500 each carry an N-linked (GlcNAc...) asparagine glycan. Asp-567 serves as the catalytic Proton donor. N-linked (GlcNAc...) asparagine glycans are attached at residues Asn-568 and Asn-734.

This sequence belongs to the glycosyl hydrolase 31 family.

The catalysed reaction is Hydrolysis of terminal, non-reducing (1-&gt;4)-linked alpha-D-glucose residues with release of alpha-D-glucose.. Functionally, hydrolyzes not only malto-oligosaccharides but also soluble starch. This Mucor javanicus protein is Alpha-glucosidase.